Here is a 93-residue protein sequence, read N- to C-terminus: Bacterial microcompartment shell protein PduA (93 aa).

Positions alanine 5 to proline 89 constitute a BMC domain.

This sequence belongs to the bacterial microcompartments protein family. Homohexamer with a central pore; Lys-26 and Arg-79 interactions are very important for hexamer symmetry. The hexamers pack against each other in arrays. Interacts individually with shell proteins PduB, PduB', PduJ, PduK, PduN and PduU. Modeling suggests PduC, PduD, PduE, PduL and PduP interact with a cleft formed by the C-terminal segments of 2 adjacent PduA subunits (on the BMC luminal side) in the hexamer.

The protein localises to the bacterial microcompartment. The protein operates within polyol metabolism; 1,2-propanediol degradation. Its function is as follows. One of the major shell proteins of the bacterial microcompartment (BMC) dedicated to 1,2-propanediol (1,2-PD) degradation, probably important for metabolite diffusion into and out of the BMC. Overexpression of a C-terminally mutated form (PduA*) makes thin parallel filaments with a honeycomb-like assembly in cross-section that probably form nanotubes. The filaments interfere with septation. PduA is probably the hub for binding multiple enzymes to the interior of the BMC. At least one of PduA or PduJ is required for BMC assembly; it must be encoded as the first gene in the pdu operon. Functionally, expression of a cosmid containing the full 21-gene pdu operon in E.coli allows E.coli to grow on 1,2-PD with the appearance of BMCs in its cytoplasm. Overexpression of this protein leads to aberrant intracellular filaments. The 1,2-PD-specific bacterial microcompartment (BMC) concentrates low levels of 1,2-PD catabolic enzymes, concentrates volatile reaction intermediates thus enhancing pathway flux and keeps the level of toxic, mutagenic propionaldehyde low. The sequence is that of Bacterial microcompartment shell protein PduA from Citrobacter freundii.